The chain runs to 359 residues: PWWP domain-containing protein 1 (359 aa).

Positions 1–37 (MNNARTNAKRRRLSSKQGGLSISEGKESNIPSVVEES) are disordered. A PWWP domain is found at 52 to 114 (FGDRILVKAP…RNSVKPLLDS (63 aa)). 2 disordered regions span residues 133 to 161 (AYEA…AAEE) and 204 to 255 (VAST…SPLN). Polar residues predominate over residues 204 to 224 (VASTSRSSTQLSDQRYPLSSN). At Ser252 the chain carries Phosphoserine.

In terms of assembly, interacts with set9 and histone H4K20me1. Associates with nucleosomes.

It localises to the nucleus. Its function is as follows. Necessary for DNA damage checkpoint activation. Required for the association of set9 with chromatin and subsequent methylation of H4K20. Associates with H4K20me1 to increase the concentration of set9 on chromatin to perform H4K20me3. H4K20me3 is mainly enriched at heterochromatin and is required for proper heterochromatin assembly. The polypeptide is PWWP domain-containing protein 1 (pdp1) (Schizosaccharomyces pombe (strain 972 / ATCC 24843) (Fission yeast)).